A 550-amino-acid polypeptide reads, in one-letter code: Warthog protein 8 (550 aa).

The signal sequence occupies residues 1-19 (MNYLLLVSGLLSVWQPVFG).

The protein belongs to the hedgehog family. In terms of processing, the C-terminal domain displays an autoproteolysis activity.

It localises to the secreted. It is found in the cell surface. Its subcellular location is the cell membrane. The protein resides in the extracellular space. Intercellular signal essential for a variety of patterning events during development. The chain is Warthog protein 8 (wrt-8) from Caenorhabditis elegans.